The following is a 220-amino-acid chain: Chaperone protein TorD (220 aa).

It belongs to the TorD/DmsD family. TorD subfamily.

It is found in the cytoplasm. Functionally, involved in the biogenesis of TorA. Acts on TorA before the insertion of the molybdenum cofactor and, as a result, probably favors a conformation of the apoenzyme that is competent for acquiring the cofactor. This chain is Chaperone protein TorD, found in Vibrio cholerae serotype O1 (strain ATCC 39315 / El Tor Inaba N16961).